A 543-amino-acid polypeptide reads, in one-letter code: Chaperonin GroEL (543 aa).

ATP-binding positions include 29–32 (TLGP), 86–90 (DGTTT), Gly413, 477–479 (DAL), and Asp493.

Belongs to the chaperonin (HSP60) family. As to quaternary structure, forms a cylinder of 14 subunits composed of two heptameric rings stacked back-to-back. Interacts with the co-chaperonin GroES.

Its subcellular location is the cytoplasm. The catalysed reaction is ATP + H2O + a folded polypeptide = ADP + phosphate + an unfolded polypeptide.. Functionally, together with its co-chaperonin GroES, plays an essential role in assisting protein folding. The GroEL-GroES system forms a nano-cage that allows encapsulation of the non-native substrate proteins and provides a physical environment optimized to promote and accelerate protein folding. In Clostridium botulinum, this protein is Chaperonin GroEL.